Here is a 156-residue protein sequence, read N- to C-terminus: Arginine repressor (156 aa).

The protein belongs to the ArgR family.

The protein localises to the cytoplasm. Its pathway is amino-acid biosynthesis; L-arginine biosynthesis [regulation]. Its function is as follows. Regulates arginine biosynthesis genes. The protein is Arginine repressor of Shewanella pealeana (strain ATCC 700345 / ANG-SQ1).